Consider the following 115-residue polypeptide: Iron-sulfur cluster insertion protein ErpA (115 aa).

3 residues coordinate iron-sulfur cluster: cysteine 42, cysteine 106, and cysteine 108.

This sequence belongs to the HesB/IscA family. As to quaternary structure, homodimer. Requires iron-sulfur cluster as cofactor.

Its function is as follows. Required for insertion of 4Fe-4S clusters for at least IspG. This Baumannia cicadellinicola subsp. Homalodisca coagulata protein is Iron-sulfur cluster insertion protein ErpA.